Reading from the N-terminus, the 171-residue chain is Small ribosomal subunit protein uS4 (171 aa).

Positions 101-165 (RRLQTVVYRK…SSLSDELHPE (65 aa)) constitute an S4 RNA-binding domain. Positions 148-171 (SSVGFDEHSSLSDELHPERAEAQE) are disordered. A compositionally biased stretch (basic and acidic residues) spans 152 to 171 (FDEHSSLSDELHPERAEAQE).

It belongs to the universal ribosomal protein uS4 family. Part of the 30S ribosomal subunit. Contacts protein S5. The interaction surface between S4 and S5 is involved in control of translational fidelity.

Functionally, one of the primary rRNA binding proteins, it binds directly to 16S rRNA where it nucleates assembly of the body of the 30S subunit. With S5 and S12 plays an important role in translational accuracy. This Haloarcula marismortui (strain ATCC 43049 / DSM 3752 / JCM 8966 / VKM B-1809) (Halobacterium marismortui) protein is Small ribosomal subunit protein uS4.